The chain runs to 211 residues: NADH-quinone oxidoreductase subunit I (211 aa).

Residues 1 to 27 (MANTDRPALPHKRAVPPSRADSGPRRR) form a disordered region. 2 consecutive 4Fe-4S ferredoxin-type domains span residues 71–101 (LNRY…VEGA) and 117–146 (RVYQ…MTYD). [4Fe-4S] cluster is bound by residues Cys-81, Cys-84, Cys-87, Cys-91, Cys-126, Cys-129, Cys-132, and Cys-136.

Belongs to the complex I 23 kDa subunit family. As to quaternary structure, NDH-1 is composed of 14 different subunits. Subunits NuoA, H, J, K, L, M, N constitute the membrane sector of the complex. [4Fe-4S] cluster is required as a cofactor.

Its subcellular location is the cell membrane. The catalysed reaction is a quinone + NADH + 5 H(+)(in) = a quinol + NAD(+) + 4 H(+)(out). Functionally, NDH-1 shuttles electrons from NADH, via FMN and iron-sulfur (Fe-S) centers, to quinones in the respiratory chain. The immediate electron acceptor for the enzyme in this species is believed to be menaquinone. Couples the redox reaction to proton translocation (for every two electrons transferred, four hydrogen ions are translocated across the cytoplasmic membrane), and thus conserves the redox energy in a proton gradient. In Mycobacterium tuberculosis (strain ATCC 25177 / H37Ra), this protein is NADH-quinone oxidoreductase subunit I.